Reading from the N-terminus, the 428-residue chain is Histidine--tRNA ligase (428 aa).

The protein belongs to the class-II aminoacyl-tRNA synthetase family. In terms of assembly, homodimer.

The protein resides in the cytoplasm. It catalyses the reaction tRNA(His) + L-histidine + ATP = L-histidyl-tRNA(His) + AMP + diphosphate + H(+). In Lactobacillus helveticus (strain DPC 4571), this protein is Histidine--tRNA ligase.